Reading from the N-terminus, the 1711-residue chain is Serine/threonine-protein kinase MRCK beta (1711 aa).

The 267-residue stretch at 76 to 342 (FEIIKVIGRG…IEDFKKHAFF (267 aa)) folds into the Protein kinase domain. ATP is bound by residues 82–90 (IGRGAFGEV) and lysine 105. Catalysis depends on aspartate 200, which acts as the Proton acceptor. A phosphoserine; by autocatalysis mark is found at serine 221 and serine 233. Threonine 239 carries the post-translational modification Phosphothreonine; by autocatalysis. Positions 343 to 413 (EGLNWENIRN…TTESCFSDRG (71 aa)) constitute an AGC-kinase C-terminal domain. The residue at position 423 (threonine 423) is a Phosphothreonine. 2 coiled-coil regions span residues 431-815 (QRDL…AHWE) and 878-939 (ELQS…FRAD). The segment at 461–484 (LQESTQTVQSLHGSSRALSNSNRD) is disordered. Over residues 463 to 481 (ESTQTVQSLHGSSRALSNS) the composition is skewed to polar residues. Arginine 671 carries the post-translational modification Omega-N-methylarginine. A Phosphotyrosine modification is found at tyrosine 954. The segment at 969-1009 (SSASEQETQAPKPEASPSMSVAASEQQEDMARPPQRPSAVP) is disordered. The segment at 1025–1075 (AHQFSIKSFSSPTQCSHCTSLMVGLIRQGYACEVCSFACHVSCKDGAPQVC) adopts a Phorbol-ester/DAG-type zinc-finger fold. One can recognise a PH domain in the interval 1095–1214 (GTAYKGHVKV…WVGILEGLQS (120 aa)). The CNH domain maps to 1240 to 1513 (IKAILTAAIV…RPLNSEGTLN (274 aa)). One can recognise a CRIB domain in the interval 1583 to 1596 (ISNPTNFNHVAHMG). The segment at 1611-1711 (AVPPSQEERP…EGLEQPACDT (101 aa)) is disordered. The segment covering 1641 to 1650 (WPSSGGSEPS) has biased composition (polar residues). A compositionally biased stretch (basic and acidic residues) spans 1664–1675 (DFDKEPDSDSTK). Phosphoserine occurs at positions 1680, 1682, 1686, 1690, and 1693.

Belongs to the protein kinase superfamily. AGC Ser/Thr protein kinase family. DMPK subfamily. As to quaternary structure, homodimer and homotetramer via the coiled coil regions. Interacts tightly with GTP-bound but not GDP-bound CDC42. Interacts with TJP1, when in the presence of catalytically active CDC42. Forms a tripartite complex with MYO18A and LURAP1 with the latter acting as an adapter connecting CDC42BPB and MYO18A. LURAP1 binding results in activation of CDC42BPB by abolition of its negative autoregulation. Interacts with STRIP1, STRN3 and SIKE1. Interacts with CPNE4 (via VWFA domain). Interacts with LURAP1. Interacts (via AGC-kinase C-terminal domain) with FAM89B/LRAP25 (via LRR repeat). Forms a tripartite complex with FAM89B/LRAP25 and LIMK1. Mg(2+) serves as cofactor. Proteolytically cleaved by caspases upon apoptosis induction. Expressed in all tissues examined, with high levels in heart, brain, placenta and lung.

The protein localises to the cytoplasm. It localises to the cell membrane. It is found in the cell junction. Its subcellular location is the cell projection. The protein resides in the lamellipodium. The enzyme catalyses L-seryl-[protein] + ATP = O-phospho-L-seryl-[protein] + ADP + H(+). The catalysed reaction is L-threonyl-[protein] + ATP = O-phospho-L-threonyl-[protein] + ADP + H(+). Maintained in an inactive, closed conformation by an interaction between the kinase domain and the negative autoregulatory C-terminal coiled-coil region. Agonist binding to the phorbol ester binding site disrupts this, releasing the kinase domain to allow N-terminus-mediated dimerization and kinase activation by transautophosphorylation. Inhibited by chelerythrine chloride. Its function is as follows. Serine/threonine-protein kinase which is an important downstream effector of CDC42 and plays a role in the regulation of cytoskeleton reorganization and cell migration. Regulates actin cytoskeletal reorganization via phosphorylation of PPP1R12C and MYL9/MLC2. In concert with MYO18A and LURAP1, is involved in modulating lamellar actomyosin retrograde flow that is crucial to cell protrusion and migration. Phosphorylates PPP1R12A. In concert with FAM89B/LRAP25 mediates the targeting of LIMK1 to the lamellipodium resulting in its activation and subsequent phosphorylation of CFL1 which is important for lamellipodial F-actin regulation. The protein is Serine/threonine-protein kinase MRCK beta of Homo sapiens (Human).